The sequence spans 48 residues: Ribulose bisphosphate carboxylase large chain (48 aa).

This sequence belongs to the RuBisCO large chain family. Type I subfamily. As to quaternary structure, heterohexadecamer of 8 large chains and 8 small chains.

Its subcellular location is the plastid. It localises to the chloroplast. It carries out the reaction 2 (2R)-3-phosphoglycerate + 2 H(+) = D-ribulose 1,5-bisphosphate + CO2 + H2O. The enzyme catalyses D-ribulose 1,5-bisphosphate + O2 = 2-phosphoglycolate + (2R)-3-phosphoglycerate + 2 H(+). RuBisCO catalyzes two reactions: the carboxylation of D-ribulose 1,5-bisphosphate, the primary event in carbon dioxide fixation, as well as the oxidative fragmentation of the pentose substrate in the photorespiration process. Both reactions occur simultaneously and in competition at the same active site. This Pinus pinaster (Maritime pine) protein is Ribulose bisphosphate carboxylase large chain (rbcL).